The sequence spans 153 residues: Ubiquitin/ISG15-conjugating enzyme E2 L6 (153 aa).

Positions 2-149 (TASKRVAKEL…AEEFTLQYGV (148 aa)) constitute a UBC core domain. C86 (glycyl thioester intermediate) is an active-site residue.

Belongs to the ubiquitin-conjugating enzyme family. In terms of assembly, interacts with RNF19A, RNF19B and RNF144B. Interacts with FLT3 (tyrosine phosphorylated). ISGylated.

It catalyses the reaction S-ubiquitinyl-[E1 ubiquitin-activating enzyme]-L-cysteine + [E2 ubiquitin-conjugating enzyme]-L-cysteine = [E1 ubiquitin-activating enzyme]-L-cysteine + S-ubiquitinyl-[E2 ubiquitin-conjugating enzyme]-L-cysteine.. The protein operates within protein modification; protein ubiquitination. In terms of biological role, catalyzes the covalent attachment of ubiquitin to other proteins. Functions in the E6/E6-AP-induced ubiquitination of p53/TP53. Promotes ubiquitination and subsequent proteasomal degradation of FLT3. In Rattus norvegicus (Rat), this protein is Ubiquitin/ISG15-conjugating enzyme E2 L6 (Ube2l6).